The chain runs to 258 residues: Small ribosomal subunit protein uS2 (258 aa).

The interval 227–258 (GEQFAPASEQKEEVKTQEVQEVEDSNDDVIDD) is disordered. Basic and acidic residues predominate over residues 235–244 (EQKEEVKTQE). A compositionally biased stretch (acidic residues) spans 246-258 (QEVEDSNDDVIDD).

It belongs to the universal ribosomal protein uS2 family.

This Caldicellulosiruptor saccharolyticus (strain ATCC 43494 / DSM 8903 / Tp8T 6331) protein is Small ribosomal subunit protein uS2.